The sequence spans 118 residues: Small ribosomal subunit protein uS13 (118 aa).

The segment at 91-118 is disordered; sequence HRRGLPVRGQRTRTNARTRKGPRRPIKK.

It belongs to the universal ribosomal protein uS13 family. As to quaternary structure, part of the 30S ribosomal subunit. Forms a loose heterodimer with protein S19. Forms two bridges to the 50S subunit in the 70S ribosome.

Functionally, located at the top of the head of the 30S subunit, it contacts several helices of the 16S rRNA. In the 70S ribosome it contacts the 23S rRNA (bridge B1a) and protein L5 of the 50S subunit (bridge B1b), connecting the 2 subunits; these bridges are implicated in subunit movement. Contacts the tRNAs in the A and P-sites. The sequence is that of Small ribosomal subunit protein uS13 from Methylococcus capsulatus (strain ATCC 33009 / NCIMB 11132 / Bath).